The following is a 702-amino-acid chain: DNA ligase (702 aa).

Residues 32–36 and 81–82 each bind NAD(+); these read DAEYD and SL. The tract at residues 104-125 is disordered; sequence AESSAQKASLNPLVRDSDQKNR. E139 serves as a coordination point for NAD(+). The active-site N6-AMP-lysine intermediate is the K141. R162, E199, K316, and K340 together coordinate NAD(+). 4 residues coordinate Zn(2+): C434, C437, C452, and C458. The BRCT domain maps to 616 to 702; it reads KPNHPFRDKT…KALKPEGTKV (87 aa).

It belongs to the NAD-dependent DNA ligase family. LigA subfamily. The cofactor is Mg(2+). Mn(2+) serves as cofactor.

The catalysed reaction is NAD(+) + (deoxyribonucleotide)n-3'-hydroxyl + 5'-phospho-(deoxyribonucleotide)m = (deoxyribonucleotide)n+m + AMP + beta-nicotinamide D-nucleotide.. In terms of biological role, DNA ligase that catalyzes the formation of phosphodiester linkages between 5'-phosphoryl and 3'-hydroxyl groups in double-stranded DNA using NAD as a coenzyme and as the energy source for the reaction. It is essential for DNA replication and repair of damaged DNA. In Hamiltonella defensa subsp. Acyrthosiphon pisum (strain 5AT), this protein is DNA ligase.